The primary structure comprises 490 residues: MTSMTATNAQPFTIVNVPEMRRVQRIHFVGIGGAGMAGIAEVLLNQGYQISGSDIAENANTERLRCLGATVVLGHMANNIEGASVVVVSSAIKADNAELVAAHQLRVPVVRRAEMLAELMRFRHGIAVAGTHGKTTTTSLVASIFAEAGRDPTFVIGGLLNSAGSNARLGNSKYLIAEADESDASFLHLQPMVAIVTNIEADHMDTYEGDFNKLLDTYVEFLHNLPFYGLAVMCVDDPVVSDLIPRLGRQTMTYGFSEAADVRAIDYKQTASESCFTILRKGLKPLDVCLNLPGKHNVLNALAAVAVATDEGINDEAIKSALNKFEGIGRRFQHYGNFAISDKDSNKEPGEVMLVDDYGHHPSEVAATIQAAREGWPERRLVMAFQPHRYSRTRDLYEDFVNVLSQVDVLLMLEVYSAGETPVSGADSRSLCRSIRQRGQIDPVYVATVDDMPEVLESVLAPGDLLLTQGAGNIGALAKRIATEVLSHES.

130 to 136 (GTHGKTT) provides a ligand contact to ATP.

This sequence belongs to the MurCDEF family.

Its subcellular location is the cytoplasm. The catalysed reaction is UDP-N-acetyl-alpha-D-muramate + L-alanine + ATP = UDP-N-acetyl-alpha-D-muramoyl-L-alanine + ADP + phosphate + H(+). It participates in cell wall biogenesis; peptidoglycan biosynthesis. Functionally, cell wall formation. The protein is UDP-N-acetylmuramate--L-alanine ligase of Idiomarina loihiensis (strain ATCC BAA-735 / DSM 15497 / L2-TR).